A 136-amino-acid chain; its full sequence is Cystatin-2 (136 aa).

An N-terminal signal peptide occupies residues 1–24 (MALLRGFLVCSLLLLSCICKEALG). Residues 29–124 (GGLENASPEE…CTFEVYNIPW (96 aa)) enclose the Cystatin domain. The Secondary area of contact motif lies at 73 to 77 (QIVSG). Cystine bridges form between cysteine 91–cysteine 101 and cysteine 115–cysteine 135.

Belongs to the cystatin family. As to expression, expressed by the venom gland.

The protein localises to the secreted. Functionally, inhibits various C1 cysteine proteases including cathepsin L, papain and cathepsin B. This protein has no toxic activity and its function in the venom is unknown. It may play a role as housekeeping or regulatory protein. The chain is Cystatin-2 from Crotalus adamanteus (Eastern diamondback rattlesnake).